Reading from the N-terminus, the 174-residue chain is NADH-ubiquinone oxidoreductase chain 6 (174 aa).

A run of 6 helical transmembrane segments spans residues 1–21, 24–44, 47–67, 86–106, 111–131, and 151–171; these read MTYALFLLSVILVMGFVGFSS, SPIYGGLVLIISGAVGCAVIL, GGGYMGLMVFLIYLGGMMVVF, VEVLVSVLVGLVMEVGLVLWV, GVVVVVNFNSVGSWMIYEGEG, and WLVVVTGWTLFVGVYVVIEIA.

It belongs to the complex I subunit 6 family. Core subunit of respiratory chain NADH dehydrogenase (Complex I) which is composed of 45 different subunits.

It is found in the mitochondrion inner membrane. It catalyses the reaction a ubiquinone + NADH + 5 H(+)(in) = a ubiquinol + NAD(+) + 4 H(+)(out). Functionally, core subunit of the mitochondrial membrane respiratory chain NADH dehydrogenase (Complex I) which catalyzes electron transfer from NADH through the respiratory chain, using ubiquinone as an electron acceptor. Essential for the catalytic activity and assembly of complex I. In Pongo abelii (Sumatran orangutan), this protein is NADH-ubiquinone oxidoreductase chain 6 (MT-ND6).